Consider the following 715-residue polypeptide: MSSGTSGDQISHFGKTLTTTASLVFGSQSMEDTILSYSSPYKKILHDTITSSGGTSSLMKVERSGRMFTPFRTRNSAFQDIFHASSGRGYFKNGFSDTRTSFQVLSYLSDAMLADIPSSESAAATSGKLVTEKGEKGKKKRAETAHARGPSLYQGFEASLPTINQTITTHQKKQIMNRDIKSIRESDATPEDVGQDVDIEKGEEETTHDEFTLPKGIKPEHLSNSYSIKNLKGAVQTITDNLDLLEIQKNLAASEIRELDLKMEKLKLMRDLVFRRVAKIEQNELFLEKHLMNIRERIDMIEEYNLDNDTDAEKAYEEATSAPEDTKDQYSELPDANTAESGETVVQEPQVNLASAQKSLKKRSKQTGYSHKNHEKKVQQHEFRHLRKTYPTLQQYYEPGANILSFDSAHEDNVTCLDFNLPFGTLCSAGKLDPTIKVWNLSKNKHVASITGHLATVSCMQMDQYNTLITGGRDALLKMWDIQKAIDNDSIPSDEVCIYTFDSHIDEITALSFEANNLVSGSQDRTIRQWDLNNGKCVQTLDINFATGGNLSRSMIGSGFLNTNNDHPIIGAIQCYDAALATGTKDGIVRLWDLRSGRVVRTLEGHSDAVTSLQFDSLNLVTGSLDNSIRIWDLRTGTLADTFSYEHPVTCLQFDLNKIVVANQEGTVKVYNRQEKKHWFCGGDEHSENAVEYVRYKDGYLVEGRANGDINAWAI.

Residues 122 to 147 (AAATSGKLVTEKGEKGKKKRAETAHA) form a disordered region. Positions 228-268 (IKNLKGAVQTITDNLDLLEIQKNLAASEIRELDLKMEKLKL) form a coiled coil. A disordered region spans residues 313 to 380 (EKAYEEATSA…HKNHEKKVQQ (68 aa)). Polar residues predominate over residues 347–358 (QEPQVNLASAQK). Positions 359–375 (SLKKRSKQTGYSHKNHE) are enriched in basic residues. 7 WD repeats span residues 409–449 (AHED…HVAS), 452–490 (GHLA…DNDS), 503–542 (SHID…QTLD), 564–604 (NNDH…RTLE), 605–644 (GHSD…DTFS), 646–681 (EHPV…HWFC), and 685–715 (EHSE…AWAI).

It belongs to the WD repeat MDV1/CAF4 family.

It localises to the mitochondrion outer membrane. Its function is as follows. Involved in mitochondrial fission. Acts as an adapter protein required to form mitochondrial fission complexes. Formation of these complexes is required to promote constriction and fission of the mitochondrial compartment at a late step in mitochondrial division. This chain is Mitochondrial division protein 1 (MDV1), found in Eremothecium gossypii (strain ATCC 10895 / CBS 109.51 / FGSC 9923 / NRRL Y-1056) (Yeast).